The sequence spans 497 residues: Protein nucleotidyltransferase YdiU (497 aa).

ATP-binding residues include Gly92, Gly94, Arg95, Lys114, Asp126, Gly127, Arg177, and Arg184. Catalysis depends on Asp261, which acts as the Proton acceptor. 2 residues coordinate Mg(2+): Asn262 and Asp271. Residue Asp271 coordinates ATP.

Belongs to the SELO family. The cofactor is Mg(2+). Requires Mn(2+) as cofactor.

It carries out the reaction L-seryl-[protein] + ATP = 3-O-(5'-adenylyl)-L-seryl-[protein] + diphosphate. It catalyses the reaction L-threonyl-[protein] + ATP = 3-O-(5'-adenylyl)-L-threonyl-[protein] + diphosphate. The catalysed reaction is L-tyrosyl-[protein] + ATP = O-(5'-adenylyl)-L-tyrosyl-[protein] + diphosphate. The enzyme catalyses L-histidyl-[protein] + UTP = N(tele)-(5'-uridylyl)-L-histidyl-[protein] + diphosphate. It carries out the reaction L-seryl-[protein] + UTP = O-(5'-uridylyl)-L-seryl-[protein] + diphosphate. It catalyses the reaction L-tyrosyl-[protein] + UTP = O-(5'-uridylyl)-L-tyrosyl-[protein] + diphosphate. In terms of biological role, nucleotidyltransferase involved in the post-translational modification of proteins. It can catalyze the addition of adenosine monophosphate (AMP) or uridine monophosphate (UMP) to a protein, resulting in modifications known as AMPylation and UMPylation. This is Protein nucleotidyltransferase YdiU from Bordetella petrii (strain ATCC BAA-461 / DSM 12804 / CCUG 43448).